The sequence spans 315 residues: tRNA dimethylallyltransferase (315 aa).

11-18 (GPTASGKS) contributes to the ATP binding site. Residue 13–18 (TASGKS) coordinates substrate. Interaction with substrate tRNA regions lie at residues 36 to 39 (DSMQ) and 160 to 164 (QRLIR).

It belongs to the IPP transferase family. As to quaternary structure, monomer. It depends on Mg(2+) as a cofactor.

It catalyses the reaction adenosine(37) in tRNA + dimethylallyl diphosphate = N(6)-dimethylallyladenosine(37) in tRNA + diphosphate. Its function is as follows. Catalyzes the transfer of a dimethylallyl group onto the adenine at position 37 in tRNAs that read codons beginning with uridine, leading to the formation of N6-(dimethylallyl)adenosine (i(6)A). The polypeptide is tRNA dimethylallyltransferase (Rickettsia bellii (strain RML369-C)).